The chain runs to 433 residues: Succinate--CoA ligase [ADP-forming] subunit beta, mitochondrial (433 aa).

A mitochondrion-targeting transit peptide spans 1–23; it reads MLTRSVLRKAPRAFSPFLQKRNL. One can recognise an ATP-grasp domain in the interval 31–273; sequence HDILRKFGVD…ISQEDPDEAR (243 aa). Residues Lys-68, 75 to 77, and Glu-136 each bind ATP; that span reads GRG. Residues Asn-228 and Asp-242 each contribute to the Mg(2+) site. Residues Asn-293 and 350-352 contribute to the substrate site; that span reads GIV.

The protein belongs to the succinate/malate CoA ligase beta subunit family. Heterodimer of an alpha and a beta subunit. The cofactor is Mg(2+).

The protein localises to the mitochondrion. The enzyme catalyses succinate + ATP + CoA = succinyl-CoA + ADP + phosphate. It participates in carbohydrate metabolism; tricarboxylic acid cycle; succinate from succinyl-CoA (ligase route): step 1/1. In terms of biological role, succinyl-CoA synthetase functions in the citric acid cycle (TCA), coupling the hydrolysis of succinyl-CoA to the synthesis of ATP and thus represents the only step of substrate-level phosphorylation in the TCA. The beta subunit provides nucleotide specificity of the enzyme and binds the substrate succinate, while the binding sites for coenzyme A and phosphate are found in the alpha subunit. This Schizosaccharomyces pombe (strain 972 / ATCC 24843) (Fission yeast) protein is Succinate--CoA ligase [ADP-forming] subunit beta, mitochondrial.